The primary structure comprises 525 residues: Cobyric acid synthase (525 aa).

The 202-residue stretch at 251 to 452 (ELEIAVLYLP…FHGIFDNDLL (202 aa)) folds into the GATase cobBQ-type domain. Cysteine 332 acts as the Nucleophile in catalysis. The active site involves histidine 444.

It belongs to the CobB/CobQ family. CobQ subfamily.

It functions in the pathway cofactor biosynthesis; adenosylcobalamin biosynthesis. Catalyzes amidations at positions B, D, E, and G on adenosylcobyrinic A,C-diamide. NH(2) groups are provided by glutamine, and one molecule of ATP is hydrogenolyzed for each amidation. The polypeptide is Cobyric acid synthase (Pelotomaculum thermopropionicum (strain DSM 13744 / JCM 10971 / SI)).